Consider the following 256-residue polypeptide: 5-keto-4-deoxy-D-glucarate aldolase (256 aa).

The Proton acceptor role is filled by His50. Residue Gln151 participates in substrate binding. Mg(2+) is bound at residue Glu153. Positions 178 and 179 each coordinate substrate. Asp179 contacts Mg(2+).

This sequence belongs to the HpcH/HpaI aldolase family. KDGluc aldolase subfamily. As to quaternary structure, homohexamer; trimer of dimers. Requires Mg(2+) as cofactor.

It catalyses the reaction 5-dehydro-4-deoxy-D-glucarate = 2-hydroxy-3-oxopropanoate + pyruvate. It carries out the reaction 2-dehydro-3-deoxy-D-glucarate = 2-hydroxy-3-oxopropanoate + pyruvate. Its pathway is carbohydrate acid metabolism; galactarate degradation; D-glycerate from galactarate: step 2/3. Functionally, catalyzes the reversible retro-aldol cleavage of both 5-keto-4-deoxy-D-glucarate and 2-keto-3-deoxy-D-glucarate to pyruvate and tartronic semialdehyde. The polypeptide is 5-keto-4-deoxy-D-glucarate aldolase (Enterobacter sp. (strain 638)).